Consider the following 267-residue polypeptide: Putative ankyrin repeat protein RF_1099 (267 aa).

4 ANK repeats span residues 46–75, 78–107, 136–165, and 170–199; these read DPIT…GVNQ, LGWV…SMSL, DGIT…NPNV, and TGMT…DPNI. Positions 238 to 265 form a coiled coil; the sequence is KQKIIKERNSIKTRNKEKEKEIKKLFNS.

This is Putative ankyrin repeat protein RF_1099 from Rickettsia felis (strain ATCC VR-1525 / URRWXCal2) (Rickettsia azadi).